Reading from the N-terminus, the 249-residue chain is Mannose-binding protein A (249 aa).

An N-terminal signal peptide occupies residues 1–20; the sequence is MLLFSSLPVLLLCVVTASYS. Positions 41–102 are disordered; that stretch reads VTNGTPGRDG…KGDPGDTSGV (62 aa). Residues 48-60 show a composition bias toward basic and acidic residues; that stretch reads RDGRDGPKGEKGE. The residue at position 54 (P54) is a 4-hydroxyproline. 2 positions are modified to 5-hydroxylysine: K55 and K58. Residues K55 and K58 are each glycosylated (O-linked (Gal...) hydroxylysine). Residues P61, P72, P78, and P89 each carry the 4-hydroxyproline modification. A Collagen-like domain is found at 64 to 98; the sequence is GFRGSQGPPGKMGPPGNIGETGPLGPKGQKGDPGD. K90 and K93 each carry 5-hydroxylysine. 2 O-linked (Gal...) hydroxylysine glycosylation sites follow: K90 and K93. Positions 135–246 constitute a C-type lectin domain; it reads SRKKLYVTNG…CSSSFLAVCE (112 aa). 2 disulfide bridges follow: C156–C245 and C223–C237. The Ca(2+) site is built by D189, E193, E213, N215, D216, E221, D222, N233, and D234. Residues 213–221 are calcium-dependent carbohydrate binding; that stretch reads EPNDHGSGE.

Interacts with MASP1 and MASP2. Forms oligomeric complexes of 3, 4, 5 or, predominantly, 6 homotrimers. The homotrimers appear as globular heads that are connected to a central hub by thin stalks. Hydroxylated on lysine and proline residues within the collagen-like domain. Post-translationally, O-glycosylated. O-linked glycans on hydroxylysine residues consist of Glc-Gal disaccharides bound to the oxygen atom of post-translationally added hydroxyl groups. Detected in blood serum (at protein level). Expressed in liver. Weakly expressed in lung, testis and brain. Not detected in bone marrow and heart.

It localises to the secreted. Calcium-dependent lectin. Plays a role in the innate immune response by binding mannose, fucose and N-acetylglucosamine on bacteria, including strains of A.suis, H.parasuis and A.pleuropneumoniae, and activates the lectin complement pathway. According to some authors, it only binds mannose. The sequence is that of Mannose-binding protein A from Sus scrofa (Pig).